The following is a 474-amino-acid chain: Uronate isomerase (474 aa).

This sequence belongs to the metallo-dependent hydrolases superfamily. Uronate isomerase family.

The catalysed reaction is D-glucuronate = D-fructuronate. The enzyme catalyses aldehydo-D-galacturonate = keto-D-tagaturonate. Its pathway is carbohydrate metabolism; pentose and glucuronate interconversion. The polypeptide is Uronate isomerase (Photorhabdus laumondii subsp. laumondii (strain DSM 15139 / CIP 105565 / TT01) (Photorhabdus luminescens subsp. laumondii)).